The following is a 167-amino-acid chain: Gametocyte-specific factor 1 (167 aa).

At Ser-8 the chain carries Phosphoserine. CHHC U11-48K-type zinc fingers lie at residues 14–41 (LLQCPYDKNHQIRACRFPYHLIKCRKNH) and 48–75 (LATCPFNARHQVPRAEISHHISSCDDKS). Zn(2+) is bound by residues Cys-17, His-23, His-33, Cys-37, Cys-51, His-57, His-67, and Cys-71.

The protein belongs to the UPF0224 (FAM112) family. In terms of tissue distribution, expressed abundantly in adult testis, at moderate levels in unfertilized eggs and ovaries and weakly in embryonic stem cells.

It localises to the cytoplasm. Functionally, required for spermatogenesis and is involved in the suppression of retrotransposon transcription in male germ cells. The protein is Gametocyte-specific factor 1 of Mus musculus (Mouse).